A 203-amino-acid chain; its full sequence is ATP-dependent Clp protease proteolytic subunit 1 (203 aa).

S103 serves as the catalytic Nucleophile. The active site involves H128.

This sequence belongs to the peptidase S14 family. In terms of assembly, fourteen ClpP subunits assemble into 2 heptameric rings which stack back to back to give a disk-like structure with a central cavity, resembling the structure of eukaryotic proteasomes.

It localises to the cytoplasm. It catalyses the reaction Hydrolysis of proteins to small peptides in the presence of ATP and magnesium. alpha-casein is the usual test substrate. In the absence of ATP, only oligopeptides shorter than five residues are hydrolyzed (such as succinyl-Leu-Tyr-|-NHMec, and Leu-Tyr-Leu-|-Tyr-Trp, in which cleavage of the -Tyr-|-Leu- and -Tyr-|-Trp bonds also occurs).. Cleaves peptides in various proteins in a process that requires ATP hydrolysis. Has a chymotrypsin-like activity. Plays a major role in the degradation of misfolded proteins. In Treponema pallidum (strain Nichols), this protein is ATP-dependent Clp protease proteolytic subunit 1.